Here is a 697-residue protein sequence, read N- to C-terminus: Elongation factor G (697 aa).

The tr-type G domain occupies 10–290; the sequence is THFRNIGIAA…AVVDYLPSPL (281 aa). GTP-binding positions include 19–26, 89–93, and 143–146; these read AHIDAGKT, DTPGH, and NKMD.

The protein belongs to the TRAFAC class translation factor GTPase superfamily. Classic translation factor GTPase family. EF-G/EF-2 subfamily.

It localises to the cytoplasm. Functionally, catalyzes the GTP-dependent ribosomal translocation step during translation elongation. During this step, the ribosome changes from the pre-translocational (PRE) to the post-translocational (POST) state as the newly formed A-site-bound peptidyl-tRNA and P-site-bound deacylated tRNA move to the P and E sites, respectively. Catalyzes the coordinated movement of the two tRNA molecules, the mRNA and conformational changes in the ribosome. This chain is Elongation factor G, found in Deinococcus deserti (strain DSM 17065 / CIP 109153 / LMG 22923 / VCD115).